Reading from the N-terminus, the 185-residue chain is Ribosome-recycling factor (185 aa).

The protein belongs to the RRF family.

Its subcellular location is the cytoplasm. Functionally, responsible for the release of ribosomes from messenger RNA at the termination of protein biosynthesis. May increase the efficiency of translation by recycling ribosomes from one round of translation to another. The chain is Ribosome-recycling factor from Chloroflexus aggregans (strain MD-66 / DSM 9485).